A 269-amino-acid polypeptide reads, in one-letter code: Tryptophan synthase alpha chain (269 aa).

Residues Glu-49 and Asp-60 each act as proton acceptor in the active site.

Belongs to the TrpA family. As to quaternary structure, tetramer of two alpha and two beta chains.

It carries out the reaction (1S,2R)-1-C-(indol-3-yl)glycerol 3-phosphate + L-serine = D-glyceraldehyde 3-phosphate + L-tryptophan + H2O. It functions in the pathway amino-acid biosynthesis; L-tryptophan biosynthesis; L-tryptophan from chorismate: step 5/5. In terms of biological role, the alpha subunit is responsible for the aldol cleavage of indoleglycerol phosphate to indole and glyceraldehyde 3-phosphate. This chain is Tryptophan synthase alpha chain, found in Photobacterium profundum (strain SS9).